Consider the following 291-residue polypeptide: Small ribosomal subunit protein uS2 (291 aa).

This sequence belongs to the universal ribosomal protein uS2 family.

This chain is Small ribosomal subunit protein uS2, found in Orientia tsutsugamushi (strain Boryong) (Rickettsia tsutsugamushi).